The chain runs to 257 residues: Imidazole glycerol phosphate synthase subunit HisF (257 aa).

Catalysis depends on residues D11 and D130.

This sequence belongs to the HisA/HisF family. As to quaternary structure, heterodimer of HisH and HisF.

It is found in the cytoplasm. The enzyme catalyses 5-[(5-phospho-1-deoxy-D-ribulos-1-ylimino)methylamino]-1-(5-phospho-beta-D-ribosyl)imidazole-4-carboxamide + L-glutamine = D-erythro-1-(imidazol-4-yl)glycerol 3-phosphate + 5-amino-1-(5-phospho-beta-D-ribosyl)imidazole-4-carboxamide + L-glutamate + H(+). Its pathway is amino-acid biosynthesis; L-histidine biosynthesis; L-histidine from 5-phospho-alpha-D-ribose 1-diphosphate: step 5/9. In terms of biological role, IGPS catalyzes the conversion of PRFAR and glutamine to IGP, AICAR and glutamate. The HisF subunit catalyzes the cyclization activity that produces IGP and AICAR from PRFAR using the ammonia provided by the HisH subunit. This Aeromonas hydrophila subsp. hydrophila (strain ATCC 7966 / DSM 30187 / BCRC 13018 / CCUG 14551 / JCM 1027 / KCTC 2358 / NCIMB 9240 / NCTC 8049) protein is Imidazole glycerol phosphate synthase subunit HisF.